A 380-amino-acid polypeptide reads, in one-letter code: Alpha-glucoside transport system permease protein AglG (380 aa).

A run of 6 helical transmembrane segments spans residues 13 to 33 (VHLS…GLLI), 179 to 199 (VIPI…PFPG), 202 to 222 (VLLA…LIPL), 239 to 259 (TYMG…IYLL), 288 to 308 (IILP…FLWT), and 344 to 364 (EILT…FFAL). Residues 167 to 364 (FLNSLTVAVP…VVPLIVFFAL (198 aa)) form the ABC transmembrane type-1 domain.

This sequence belongs to the binding-protein-dependent transport system permease family. MalFG subfamily.

The protein localises to the cell inner membrane. In terms of biological role, part of the binding-protein-dependent transport system for alpha-glucosides such as sucrose, maltose and trehalose. Probably responsible for the translocation of the substrate across the membrane. The polypeptide is Alpha-glucoside transport system permease protein AglG (aglG) (Rhizobium meliloti (strain 1021) (Ensifer meliloti)).